Reading from the N-terminus, the 689-residue chain is Bifunctional protein GAL10 (689 aa).

The tract at residues 1-345 is galactowaldenase; that stretch reads MSYILVTGGA…TTKNPFGFQI (345 aa). 3 to 34 lines the NAD(+) pocket; it reads YILVTGGAGYIGSHTVVELVNNGYNVVVVDNL. Residues 346-689 form a mutarotase region; that stretch reads NNYSWTKFDS…SYTIYRFENF (344 aa). Histidine 534 serves as the catalytic For mutarotase activity.

This sequence in the N-terminal section; belongs to the NAD(P)-dependent epimerase/dehydratase family. In the C-terminal section; belongs to the aldose epimerase family. NAD(+) is required as a cofactor.

It catalyses the reaction UDP-alpha-D-glucose = UDP-alpha-D-galactose. The catalysed reaction is alpha-D-glucose = beta-D-glucose. The protein operates within carbohydrate metabolism; galactose metabolism. It participates in carbohydrate metabolism; hexose metabolism. In terms of biological role, mutarotase converts alpha-aldose to the beta-anomer. It is active on D-glucose, L-arabinose, D-xylose, D-galactose, maltose and lactose. The chain is Bifunctional protein GAL10 (GAL10) from Pachysolen tannophilus (Yeast).